The chain runs to 869 residues: Eukaryotic translation initiation factor 3 subunit C (869 aa).

Disordered stretches follow at residues 1–92 (MSRF…KSAK) and 182–242 (IKKA…VGKG). Acidic residues predominate over residues 14 to 55 (SSDEEEDLYSDDEEVQEQPEEESSEDDSEEDDDDDDDSDSSS). Basic and acidic residues predominate over residues 185-203 (ASKEHQKDIDSFRADKDAY). The PCI domain maps to 607 to 781 (FHMHINLELL…SSIIFRKGVE (175 aa)). Residues 803 to 869 (NERTLETRTQ…ALGAAVGSRA (67 aa)) form a disordered region. Residues 823–843 (GRGGRGGNRGGRGGGRGGRGG) show a composition bias toward gly residues.

It belongs to the eIF-3 subunit C family. As to quaternary structure, component of the eukaryotic translation initiation factor 3 (eIF-3) complex.

Its subcellular location is the cytoplasm. Component of the eukaryotic translation initiation factor 3 (eIF-3) complex, which is involved in protein synthesis of a specialized repertoire of mRNAs and, together with other initiation factors, stimulates binding of mRNA and methionyl-tRNAi to the 40S ribosome. The eIF-3 complex specifically targets and initiates translation of a subset of mRNAs involved in cell proliferation. The polypeptide is Eukaryotic translation initiation factor 3 subunit C (nip1) (Botryotinia fuckeliana (strain B05.10) (Noble rot fungus)).